The sequence spans 409 residues: Putative competence-damage inducible protein (409 aa).

This sequence belongs to the CinA family.

The polypeptide is Putative competence-damage inducible protein (Clostridium botulinum (strain Okra / Type B1)).